We begin with the raw amino-acid sequence, 401 residues long: DNA damage checkpoint control protein RAD17 (401 aa).

The disordered stretch occupies residues 367–393 (KKIKLPSEEENNKNRESEDEENHCKYP). Residues 371–393 (LPSEEENNKNRESEDEENHCKYP) show a composition bias toward basic and acidic residues. S383 is modified (phosphoserine).

The protein belongs to the rad1 family. In terms of assembly, component of the checkpoint clamp complex composed of DDC1, MEC3 and RAD17. The interaction with MEC3 is performed in a RAD17-dependent manner. The checkpoint clamp complex loads onto DNA. Interacts with the DNA polymerase zeta subunit REV7. 2 RAD17 subunits also form a heterotrimer with one MEC3 subunit.

It is found in the nucleus. Functionally, component of the checkpoint clamp complex involved in the surveillance mechanism that allows the DNA repair pathways to act to restore the integrity of the DNA prior to DNA synthesis or separation of the replicated chromosomes. Associates with sites of DNA damage and modulates the MEC1 signaling pathway and the activation of RAD53 in response to DNA damage at phase G1. The complex also physically regulates DNA polymerase zeta-dependent mutagenesis by controlling the access of polymerase zeta to damaged DNA. Contrary to its human counterpart, the 9-1-1 complex, the checkpoint clamp complex shows no detectable exonuclease activity. This is DNA damage checkpoint control protein RAD17 (RAD17) from Saccharomyces cerevisiae (strain ATCC 204508 / S288c) (Baker's yeast).